A 1086-amino-acid polypeptide reads, in one-letter code: 1,2-beta-oligoglucan phosphorylase (1086 aa).

Asp741 functions as the Proton donor in the catalytic mechanism.

It belongs to the glycosyl hydrolase 94 family. Monomer.

The catalysed reaction is [(1-&gt;2)-beta-D-glucosyl](n) + phosphate = [(1-&gt;2)-beta-D-glucosyl](n-1) + alpha-D-glucose 1-phosphate. Functionally, catalyzes the reversible phosphorolysis of beta-(1-&gt;2)-D-glucans. The minimum length of the substrate for the phosphorolytic reaction is 3 D-glucose units. The chain is 1,2-beta-oligoglucan phosphorylase from Listeria innocua serovar 6a (strain ATCC BAA-680 / CLIP 11262).